The chain runs to 709 residues: Polyribonucleotide nucleotidyltransferase (709 aa).

The Mg(2+) site is built by Asp489 and Asp495. Positions 556–615 (PKIDMIKIDVDKIKVVIGKGGETIDKIIAETGVKIDIDEEGNVSIFSSDQAAIDRTKDII) constitute a KH domain. An S1 motif domain is found at 625–693 (GEVYHAKVVR…DKGRVDASMK (69 aa)).

It belongs to the polyribonucleotide nucleotidyltransferase family. Requires Mg(2+) as cofactor.

The protein resides in the cytoplasm. It carries out the reaction RNA(n+1) + phosphate = RNA(n) + a ribonucleoside 5'-diphosphate. Functionally, involved in mRNA degradation. Catalyzes the phosphorolysis of single-stranded polyribonucleotides processively in the 3'- to 5'-direction. This chain is Polyribonucleotide nucleotidyltransferase, found in Streptococcus agalactiae serotype Ia (strain ATCC 27591 / A909 / CDC SS700).